The primary structure comprises 95 residues: Co-chaperonin GroES (95 aa).

It belongs to the GroES chaperonin family. As to quaternary structure, heptamer of 7 subunits arranged in a ring. Interacts with the chaperonin GroEL.

It localises to the cytoplasm. Functionally, together with the chaperonin GroEL, plays an essential role in assisting protein folding. The GroEL-GroES system forms a nano-cage that allows encapsulation of the non-native substrate proteins and provides a physical environment optimized to promote and accelerate protein folding. GroES binds to the apical surface of the GroEL ring, thereby capping the opening of the GroEL channel. The sequence is that of Co-chaperonin GroES from Syntrophotalea carbinolica (strain DSM 2380 / NBRC 103641 / GraBd1) (Pelobacter carbinolicus).